Consider the following 506-residue polypeptide: RNA-splicing ligase RtcB homolog (506 aa).

5 residues coordinate Mn(2+): aspartate 120, cysteine 123, histidine 228, histidine 260, and histidine 354. Position 227–231 (227–231 (NHYAE)) interacts with GMP. GMP contacts are provided by residues 354 to 355 (HN), 403 to 406 (GGTM), serine 410, 429 to 432 (HGAG), and lysine 505. Histidine 429 functions as the GMP-histidine intermediate in the catalytic mechanism.

Belongs to the RtcB family. In terms of assembly, catalytic component of the tRNA-splicing ligase complex. Mn(2+) serves as cofactor.

It catalyses the reaction a 3'-end 3'-phospho-ribonucleotide-RNA + a 5'-end dephospho-ribonucleoside-RNA + GTP = a ribonucleotidyl-ribonucleotide-RNA + GMP + diphosphate. The catalysed reaction is a 3'-end 2',3'-cyclophospho-ribonucleotide-RNA + a 5'-end dephospho-ribonucleoside-RNA + GTP + H2O = a ribonucleotidyl-ribonucleotide-RNA + GMP + diphosphate + H(+). Its function is as follows. Catalytic subunit of the tRNA-splicing ligase complex that acts by directly joining spliced tRNA halves to mature-sized tRNAs by incorporating the precursor-derived splice junction phosphate into the mature tRNA as a canonical 3',5'-phosphodiester. May act as an RNA ligase with broad substrate specificity, and may function toward other RNAs. This chain is RNA-splicing ligase RtcB homolog, found in Plasmodium falciparum (isolate 3D7).